The primary structure comprises 133 residues: Large ribosomal subunit protein bL17 (133 aa).

The protein belongs to the bacterial ribosomal protein bL17 family. As to quaternary structure, part of the 50S ribosomal subunit. Contacts protein L32.

This is Large ribosomal subunit protein bL17 from Polaromonas naphthalenivorans (strain CJ2).